The following is a 197-amino-acid chain: Holliday junction resolvase RecU (197 aa).

Positions 82, 84, 97, and 116 each coordinate Mg(2+).

Belongs to the RecU family. The cofactor is Mg(2+).

It localises to the cytoplasm. The enzyme catalyses Endonucleolytic cleavage at a junction such as a reciprocal single-stranded crossover between two homologous DNA duplexes (Holliday junction).. In terms of biological role, endonuclease that resolves Holliday junction intermediates in genetic recombination. Cleaves mobile four-strand junctions by introducing symmetrical nicks in paired strands. Promotes annealing of linear ssDNA with homologous dsDNA. Required for DNA repair, homologous recombination and chromosome segregation. The polypeptide is Holliday junction resolvase RecU (Streptococcus mutans serotype c (strain ATCC 700610 / UA159)).